The chain runs to 782 residues: Nucleolar RNA helicase 2 (782 aa).

The tract at residues 1–184 (MPGKLRSASK…IPVEQKEGAF (184 aa)) is disordered. Phosphoserine is present on residues Ser7 and Ser13. Basic and acidic residues-rich tracts occupy residues 26-42 (PSEK…KTDE) and 99-117 (EPLE…KAEE). Lys39 bears the N6-acetyllysine mark. A Glycyl lysine isopeptide (Lys-Gly) (interchain with G-Cter in SUMO1); alternate cross-link involves residue Lys114. A Glycyl lysine isopeptide (Lys-Gly) (interchain with G-Cter in SUMO2); alternate cross-link involves residue Lys114. The residue at position 119 (Ser119) is a Phosphoserine. A compositionally biased stretch (basic and acidic residues) spans 134–143 (GKEANGDVGE). At Lys135 the chain carries N6-acetyllysine. A phosphoserine mark is found at Ser145 and Ser169. The segment covering 172-181 (EKEIPVEQKE) has biased composition (basic and acidic residues). The Q motif motif lies at 182 to 210 (GAFSNFPISEETVKLLKARGVNFLFPIQA). The 180-residue stretch at 213–392 (FHHVYSGKDL…KKYMKSTYEQ (180 aa)) folds into the Helicase ATP-binding domain. Position 226–233 (226–233 (ARTGTGKT)) interacts with ATP. Position 292 is a phosphothreonine (Thr292). Positions 335-338 (DEVD) match the DEAD box motif. The region spanning 425-569 (DVIRVYSGHQ…GVPSATEIIK (145 aa)) is the Helicase C-terminal domain. Ser563 is modified (phosphoserine). Lys596 carries the post-translational modification N6-acetyllysine. The tract at residues 704 to 782 (ATEQPELEGP…KRSFSKAFGQ (79 aa)) is disordered. Repeat copies occupy residues 720–724 (GRGQR), 731–735 (FRGQR), and 741–747 (FRGQGQR). Residues 720–747 (GRGQRDGSRGSFRGQRGGSRNFRGQGQR) are 3 X 5 AA repeats. Over residues 728–756 (RGSFRGQRGGSRNFRGQGQRGGSRNFRGQ) the composition is skewed to low complexity. Lys778 carries the N6-acetyllysine modification.

This sequence belongs to the DEAD box helicase family. DDX21/DDX50 subfamily. Homodimer; homodimerizes via its N-terminus. Found in a multi-helicase-TICAM1 complex at least composed of DHX36, DDX1, DDX21 and TICAM1; this complex exists in resting cells with or without poly(I:C) RNA ligand stimulation. Interacts (via C-terminus) with TICAM1 (via TIR domain). Interacts with DHX36 (via C-terminus); this interaction serves as bridges to TICAM1. Interacts (via C-terminus) with DDX1 (via B30.2/SPRY domain); this interaction serves as bridges to TICAM1. Component of the B-WICH complex, at least composed of SMARCA5/SNF2H, BAZ1B/WSTF, SF3B1, DEK, MYO1C, ERCC6, MYBBP1A and DDX21. Interacts with C1QBP. Interacts with JUN. Interacts with WDR46. Interacts with MCM3AP. Interacts with WDR43. Interacts with KPNA3. Interacts with GID4. In terms of processing, acetylation by CREBBP/CBP inhibits the helicase activity. Deacetylation by SIRT7 promotes the helicase activity and overcomes R-loop-mediated stalling of RNA polymerases.

It localises to the nucleus. The protein localises to the nucleolus. The protein resides in the nucleoplasm. Its subcellular location is the cytoplasm. It is found in the cytosol. It localises to the mitochondrion. It catalyses the reaction ATP + H2O = ADP + phosphate + H(+). Its activity is regulated as follows. Acetylation inhibits the helicase activity. Functionally, RNA helicase that acts as a sensor of the transcriptional status of both RNA polymerase (Pol) I and II: promotes ribosomal RNA (rRNA) processing and transcription from polymerase II (Pol II). Binds various RNAs, such as rRNAs, snoRNAs, 7SK and, at lower extent, mRNAs. In the nucleolus, localizes to rDNA locus, where it directly binds rRNAs and snoRNAs, and promotes rRNA transcription, processing and modification. Required for rRNA 2'-O-methylation, possibly by promoting the recruitment of late-acting snoRNAs SNORD56 and SNORD58 with pre-ribosomal complexes. In the nucleoplasm, binds 7SK RNA and is recruited to the promoters of Pol II-transcribed genes: acts by facilitating the release of P-TEFb from inhibitory 7SK snRNP in a manner that is dependent on its helicase activity, thereby promoting transcription of its target genes. Functions as a cofactor for JUN-activated transcription: required for phosphorylation of JUN at 'Ser-77'. Can unwind double-stranded RNA (helicase) and can fold or introduce a secondary structure to a single-stranded RNA (foldase). Together with SIRT7, required to prevent R-loop-associated DNA damage and transcription-associated genomic instability: deacetylation by SIRT7 activates the helicase activity, thereby overcoming R-loop-mediated stalling of RNA polymerases. Involved in rRNA processing. May bind to specific miRNA hairpins. Component of a multi-helicase-TICAM1 complex that acts as a cytoplasmic sensor of viral double-stranded RNA (dsRNA) and plays a role in the activation of a cascade of antiviral responses including the induction of pro-inflammatory cytokines via the adapter molecule TICAM1. The chain is Nucleolar RNA helicase 2 (Ddx21) from Rattus norvegicus (Rat).